The following is a 751-amino-acid chain: CCR4-NOT transcription complex subunit 3 (751 aa).

Residues 240–534 (ATSPPSHSHM…QFSTTPEIKA (295 aa)) form a disordered region. Positions 257 to 268 (SSSTPTSTTSSS) are enriched in low complexity. Residues 284 to 293 (DDKKRGRSTD) are compositionally biased toward basic and acidic residues. A Phosphothreonine modification is found at T292. Residues 294-315 (SEVSQSPAKNGSKPVHSNQHPQ) show a composition bias toward polar residues. S299 is modified (phosphoserine). The span at 317 to 330 (PAVPPTYPSGPPPT) shows a compositional bias: pro residues. The segment covering 339-348 (GNNGASTPAA) has biased composition (polar residues). The segment covering 441–450 (SSSGGSSASS) has biased composition (low complexity). Over residues 463–472 (APSTSKESST) the composition is skewed to polar residues. Low complexity predominate over residues 473–498 (AAPSGAGNVASGSGNNSGGPSLLVPL). S540 carries the post-translational modification Phosphoserine. Residues 659–751 (EFYQRLSTET…YRYLEDRDLQ (93 aa)) form a repressor domain region.

This sequence belongs to the CNOT2/3/5 family. Component of the CCR4-NOT complex; distinct complexes seem to exist that differ in the participation of probably mutually exclusive catalytic subunits. In the complex interacts directly with CNOT2. Interacts with TIP120B and NANOS2. Interacts with EBF1. Interacts in an RNA-independent manner with BICC1 (via KH domains).

It is found in the nucleus. Its subcellular location is the cytoplasm. The protein localises to the P-body. Its function is as follows. Component of the CCR4-NOT complex which is one of the major cellular mRNA deadenylases and is linked to various cellular processes including bulk mRNA degradation, miRNA-mediated repression, translational repression during translational initiation and general transcription regulation. Additional complex functions may be a consequence of its influence on mRNA expression. May be involved in metabolic regulation; may be involved in recruitment of the CCR4-NOT complex to deadenylation target mRNAs involved in energy metabolism. Involved in mitotic progression and regulation of the spindle assembly checkpoint by regulating the stability of MAD1L1 mRNA. Can repress transcription and may link the CCR4-NOT complex to transcriptional regulation; the repressive function may involve histone deacetylases. Involved in the maintenance of embryonic stem (ES) cell identity; prevents their differentiation towards extraembryonic trophectoderm lineages. In Mus musculus (Mouse), this protein is CCR4-NOT transcription complex subunit 3 (Cnot3).